We begin with the raw amino-acid sequence, 397 residues long: S-adenosylmethionine synthase (397 aa).

H17 provides a ligand contact to ATP. D19 serves as a coordination point for Mg(2+). Position 45 (E45) interacts with K(+). Residues E58 and Q101 each coordinate L-methionine. Residues 101 to 111 are flexible loop; sequence QSPDIAQGVDK. Residues 176–178, 243–244, D252, 258–259, and K279 contribute to the ATP site; these read DGK, RF, and RK. D252 is an L-methionine binding site. Residue K283 coordinates L-methionine.

The protein belongs to the AdoMet synthase family. As to quaternary structure, homotetramer; dimer of dimers. Mg(2+) serves as cofactor. K(+) is required as a cofactor.

Its subcellular location is the cytoplasm. The enzyme catalyses L-methionine + ATP + H2O = S-adenosyl-L-methionine + phosphate + diphosphate. It participates in amino-acid biosynthesis; S-adenosyl-L-methionine biosynthesis; S-adenosyl-L-methionine from L-methionine: step 1/1. Its function is as follows. Catalyzes the formation of S-adenosylmethionine (AdoMet) from methionine and ATP. The overall synthetic reaction is composed of two sequential steps, AdoMet formation and the subsequent tripolyphosphate hydrolysis which occurs prior to release of AdoMet from the enzyme. The polypeptide is S-adenosylmethionine synthase (Staphylococcus aureus (strain USA300)).